Consider the following 385-residue polypeptide: Phosphate acyltransferase (385 aa).

Low complexity predominate over residues 1 to 17 (MAAGTSIGTTPGGSTSP). The segment at 1–28 (MAAGTSIGTTPGGSTSPETPPEHGLTGT) is disordered.

It belongs to the PlsX family. As to quaternary structure, homodimer. Probably interacts with PlsY.

The protein localises to the cytoplasm. The catalysed reaction is a fatty acyl-[ACP] + phosphate = an acyl phosphate + holo-[ACP]. It participates in lipid metabolism; phospholipid metabolism. Its function is as follows. Catalyzes the reversible formation of acyl-phosphate (acyl-PO(4)) from acyl-[acyl-carrier-protein] (acyl-ACP). This enzyme utilizes acyl-ACP as fatty acyl donor, but not acyl-CoA. In Dinoroseobacter shibae (strain DSM 16493 / NCIMB 14021 / DFL 12), this protein is Phosphate acyltransferase.